Here is a 356-residue protein sequence, read N- to C-terminus: tRNA N6-adenosine threonylcarbamoyltransferase (356 aa).

Positions 111 and 115 each coordinate Fe cation. Residues Leu143–Gly147, Asp178, Gly191, Asp195, and Asn286 contribute to the substrate site. Asp314 provides a ligand contact to Fe cation.

Belongs to the KAE1 / TsaD family. It depends on Fe(2+) as a cofactor.

It localises to the cytoplasm. It catalyses the reaction L-threonylcarbamoyladenylate + adenosine(37) in tRNA = N(6)-L-threonylcarbamoyladenosine(37) in tRNA + AMP + H(+). Required for the formation of a threonylcarbamoyl group on adenosine at position 37 (t(6)A37) in tRNAs that read codons beginning with adenine. Is involved in the transfer of the threonylcarbamoyl moiety of threonylcarbamoyl-AMP (TC-AMP) to the N6 group of A37, together with TsaE and TsaB. TsaD likely plays a direct catalytic role in this reaction. This chain is tRNA N6-adenosine threonylcarbamoyltransferase, found in Sorangium cellulosum (strain So ce56) (Polyangium cellulosum (strain So ce56)).